Reading from the N-terminus, the 141-residue chain is MLTAEDKKLIVQVWEKVAGHQEEFGSEALQRMFLAYPQTKTYFPHFDLHPGSEQVRGHGKKVAAALGNAVKSLDNLSQALSELSNLHAYNLRVDPVNFKLLAQCFQVVLAAHLGKDYSPEMHAAFDKFLSAVAAVLAEKYR.

Residues 1 to 141 (MLTAEDKKLI…VAAVLAEKYR (141 aa)) enclose the Globin domain. Residues His-58 and His-87 each contribute to the heme b site.

The protein belongs to the globin family. In terms of assembly, heterotetramer of two alpha-D chains and two beta chains. As to expression, red blood cells.

Its function is as follows. Involved in oxygen transport from the lung to the various peripheral tissues. The sequence is that of Hemoglobin subunit alpha-D (HBAD) from Cairina moschata (Muscovy duck).